The chain runs to 714 residues: Polyribonucleotide nucleotidyltransferase (714 aa).

Positions 489 and 495 each coordinate Mg(2+). A KH domain is found at 556–615 (PKIDTIKIDVDKIKVVIGKGGETIDKIIAETGVKIDIDEEGNVSIYSSDQDAINRAKEII). In terms of domain architecture, S1 motif spans 625 to 693 (GEVYHAKVVR…DKGRIDASMK (69 aa)). The tract at residues 691–714 (SMKALVPRPPKPEKSEAKKEGKHD) is disordered. The segment covering 700–714 (PKPEKSEAKKEGKHD) has biased composition (basic and acidic residues).

The protein belongs to the polyribonucleotide nucleotidyltransferase family. Mg(2+) is required as a cofactor.

Its subcellular location is the cytoplasm. It carries out the reaction RNA(n+1) + phosphate = RNA(n) + a ribonucleoside 5'-diphosphate. Its function is as follows. Involved in mRNA degradation. Catalyzes the phosphorolysis of single-stranded polyribonucleotides processively in the 3'- to 5'-direction. This Streptococcus equi subsp. zooepidemicus (strain MGCS10565) protein is Polyribonucleotide nucleotidyltransferase.